Consider the following 269-residue polypeptide: Formamidopyrimidine-DNA glycosylase (269 aa).

The active-site Schiff-base intermediate with DNA is the P2. Catalysis depends on E3, which acts as the Proton donor. K57 (proton donor; for beta-elimination activity) is an active-site residue. Residues H90, R109, and K150 each contribute to the DNA site. The FPG-type zinc finger occupies 235–269 (RVYGRNGEPCRTCGTPIETAKHGQRSTFFCRRCQK). The active-site Proton donor; for delta-elimination activity is R259.

It belongs to the FPG family. As to quaternary structure, monomer. Zn(2+) serves as cofactor.

It carries out the reaction Hydrolysis of DNA containing ring-opened 7-methylguanine residues, releasing 2,6-diamino-4-hydroxy-5-(N-methyl)formamidopyrimidine.. The catalysed reaction is 2'-deoxyribonucleotide-(2'-deoxyribose 5'-phosphate)-2'-deoxyribonucleotide-DNA = a 3'-end 2'-deoxyribonucleotide-(2,3-dehydro-2,3-deoxyribose 5'-phosphate)-DNA + a 5'-end 5'-phospho-2'-deoxyribonucleoside-DNA + H(+). Its function is as follows. Involved in base excision repair of DNA damaged by oxidation or by mutagenic agents. Acts as a DNA glycosylase that recognizes and removes damaged bases. Has a preference for oxidized purines, such as 7,8-dihydro-8-oxoguanine (8-oxoG). Has AP (apurinic/apyrimidinic) lyase activity and introduces nicks in the DNA strand. Cleaves the DNA backbone by beta-delta elimination to generate a single-strand break at the site of the removed base with both 3'- and 5'-phosphates. The chain is Formamidopyrimidine-DNA glycosylase from Pectobacterium carotovorum subsp. carotovorum (strain PC1).